A 57-amino-acid chain; its full sequence is uncharacterized protein (57 aa).

A helical membrane pass occupies residues 12–34 (VIAVLSLFVFAVAVFFVGMALLT).

It localises to the membrane. This is an uncharacterized protein from Pasteurella multocida (strain Pm70).